A 698-amino-acid chain; its full sequence is Superoxide-generating NADPH oxidase heavy chain subunit B (698 aa).

Disordered stretches follow at residues 1-68 (MNEK…NITP) and 134-158 (NDQV…NNKN). Topologically, residues 1 to 184 (MNEKKELQQE…KIRGWWWHRG (184 aa)) are cytoplasmic. Polar residues-rich tracts occupy residues 16–25 (FQTPKNQQLE) and 33–53 (EISS…PISQ). 2 stretches are compositionally biased toward low complexity: residues 54 to 65 (NDNSNNENESLN) and 138 to 156 (NSNT…TNNN). The chain crosses the membrane as a helical span at residues 185–205 (ISTYIMLFYIALNIGVGVHMF). Residues 206 to 229 (YNMYHSDIFKFLGLSFCFSRTAAR) are Extracellular-facing. The Ferric oxidoreductase domain maps to 225 to 375 (RTAARLINLN…LFIPFYILLC (151 aa)). A helical membrane pass occupies residues 230–250 (LINLNSAVILLPVLRNFLSWL). Topologically, residues 251–269 (RGTIVNNYIPIDKHLNFHK) are cytoplasmic. Residues His268 and His282 each coordinate heme. The chain crosses the membrane as a helical span at residues 270 to 290 (LCAFMLFCCTIIHCVGHYISF). Residues 291–324 (KKINDDVLKIDDGKSVAGDYLNININNFPDEKYL) lie on the Extracellular side of the membrane. Residues 325-345 (FFKSVPGITGHIMLLILILIV) traverse the membrane as a helical segment. Residues 346-355 (SSSMWRIRRP) lie on the Cytoplasmic side of the membrane. The chain crosses the membrane as a helical span at residues 356 to 376 (MFEIFWYVHHLFIPFYILLCF). Residues His364 and His377 each coordinate heme. Residues 377–388 (HGYSKILKKDPQ) are Extracellular-facing. The helical transmembrane segment at 389–409 (SWMWIIAPFILYSIERLIRIA) threads the bilayer. The FAD-binding FR-type domain maps to 404–528 (RLIRIARSKK…DGPFGAPAEN (125 aa)). Over 410–698 (RSKKRVILEK…CHLIFHKENF (289 aa)) the chain is Cytoplasmic. 460 to 466 (HPFTITS) provides a ligand contact to FAD.

Composed of a heavy chain and a light chain. FAD serves as cofactor.

It is found in the membrane. Its function is as follows. Critical component of the membrane-bound oxidase that generates superoxide. It is the terminal component of a respiratory chain that transfers single electrons from cytoplasmic NADPH across the plasma membrane to molecular oxygen on the exterior. This is Superoxide-generating NADPH oxidase heavy chain subunit B (noxB) from Dictyostelium discoideum (Social amoeba).